The chain runs to 253 residues: Probable U3 small nucleolar RNA-associated protein 11 (253 aa).

The tract at residues 1 to 26 is disordered; the sequence is MAAAFRKAAKSRQREHRERSQPGFRK. Glycyl lysine isopeptide (Lys-Gly) (interchain with G-Cter in SUMO2) cross-links involve residues lysine 74, lysine 83, and lysine 86. Position 90 is a phosphothreonine (threonine 90). Glycyl lysine isopeptide (Lys-Gly) (interchain with G-Cter in SUMO2) cross-links involve residues lysine 103, lysine 120, lysine 143, lysine 144, lysine 180, lysine 211, lysine 218, lysine 235, and lysine 236. Phosphoserine is present on serine 241. Lysine 246 is covalently cross-linked (Glycyl lysine isopeptide (Lys-Gly) (interchain with G-Cter in SUMO2)).

Belongs to the UTP11 family. In terms of assembly, part of the small subunit (SSU) processome, composed of more than 70 proteins and the RNA chaperone small nucleolar RNA (snoRNA) U3.

It localises to the nucleus. The protein resides in the nucleolus. Part of the small subunit (SSU) processome, first precursor of the small eukaryotic ribosomal subunit. During the assembly of the SSU processome in the nucleolus, many ribosome biogenesis factors, an RNA chaperone and ribosomal proteins associate with the nascent pre-rRNA and work in concert to generate RNA folding, modifications, rearrangements and cleavage as well as targeted degradation of pre-ribosomal RNA by the RNA exosome. Involved in nucleolar processing of pre-18S ribosomal RNA. The protein is Probable U3 small nucleolar RNA-associated protein 11 of Homo sapiens (Human).